The sequence spans 200 residues: Charged multivesicular body protein 6-A (200 aa).

Glycine 2 carries the N-myristoyl glycine lipid modification. Positions 9–102 (RRSRVTEQDK…FAQIEMKVIE (94 aa)) form a coiled coil. The disordered stretch occupies residues 166-200 (EDLELPEAPSEPLPDTIPEKQAVKNKPKPQMIAAS). The short motif at 168–179 (LELPEAPSEPLP) is the Type-2 MIT-interacting motif element.

The protein belongs to the SNF7 family. In terms of assembly, probable core component of the endosomal sorting required for transport complex III (ESCRT-III). ESCRT-III components are thought to multimerize to form a flat lattice on the perimeter membrane of the endosome.

It localises to the endomembrane system. The protein resides in the late endosome membrane. In terms of biological role, probable core component of the endosomal sorting required for transport complex III (ESCRT-III) which is involved in multivesicular bodies (MVBs) formation and sorting of endosomal cargo proteins into MVBs. MVBs contain intraluminal vesicles (ILVs) that are generated by invagination and scission from the limiting membrane of the endosome and mostly are delivered to lysosomes enabling degradation of membrane proteins, such as stimulated growth factor receptors, lysosomal enzymes and lipids. In the ESCRT-III complex, it probably serves as an acceptor for the ESCRT-II complex on endosomal membranes. The chain is Charged multivesicular body protein 6-A (chmp6-a) from Xenopus laevis (African clawed frog).